Here is a 491-residue protein sequence, read N- to C-terminus: MVCLFENLMNMIKYSIYILPLIILIVLSISIKKDVQRVHIIIQSLKLTLIVIMIVIGIEESIYVKLNGHLIKTELIKLFEYLLLGVSYMIIKMFEEGVTEGKKTKITDEGLILIYSSIIGMLISMEAHNLITLFLSLEISSICFYILALNKNSRKGIEGGLKYYIIGGIATTILLLGIVSIYKSTGSLMYTDLLVIVMENTDDYRIQMGIALIVLGLILKLGIAPFHGWLIDVYEGAGMLMTFYLTITQKLVTLMVLINLYQNLIIYTNAIMFTNGLIILILVTLVVGTIGSLRQQKLIRFIAYSAIVNSALLILMLAGSMSEELMVNSVYYLINYIIGLTVLMSLIMGFLRLNDRGTIEDIYQLKNMWVINMFGAIVYILVLMYLAGLPPMTNFISKILILLPYMVLGRVYLTMLAFFLSVGVMIYYMNLVKIIIIDKVQTHEQGVAELEITSKPTKGGRRIVLGVMWLIFSQLYLDEILNVIKVIVALI.

The next 14 membrane-spanning stretches (helical) occupy residues 11–31 (MIKY…SISI), 38–58 (VHII…VIGI), 74–94 (ELIK…IKMF), 106–126 (ITDE…ISME), 129–149 (NLIT…ILAL), 161–181 (LKYY…IVSI), 210–230 (IALI…HGWL), 238–258 (GMLM…MVLI), 270–290 (AIMF…VGTI), 298–318 (LIRF…LMLA), 330–350 (VYYL…IMGF), 375–395 (GAIV…MTNF), 411–433 (VYLT…NLVK), and 463–483 (IVLG…ILNV).

Belongs to the complex I subunit 2 family.

The protein localises to the mitochondrion inner membrane. The catalysed reaction is a ubiquinone + NADH + 5 H(+)(in) = a ubiquinol + NAD(+) + 4 H(+)(out). Core subunit of the mitochondrial membrane respiratory chain NADH dehydrogenase (Complex I) that is believed to belong to the minimal assembly required for catalysis. Complex I functions in the transfer of electrons from NADH to the respiratory chain. The immediate electron acceptor for the enzyme is believed to be ubiquinone. This chain is NADH-ubiquinone oxidoreductase chain 2 (nad2), found in Dictyostelium citrinum (Slime mold).